The primary structure comprises 136 residues: Succinate dehydrogenase 2 membrane subunit SdhC (136 aa).

The next 3 membrane-spanning stretches (helical) occupy residues 32–52 (RISGATIFFFLFVHVLDAAML), 70–90 (IVGLMEYGLVAAVLFHALNGI), and 109–129 (LWIIGSVFLLLMVPAGVVVGI). A heme-binding site is contributed by histidine 85.

The protein belongs to the cytochrome b560 family. Part of an enzyme complex containing four subunits: a flavoprotein (SdhA), an iron-sulfur protein (SdhB), plus two membrane-anchoring proteins (SdhC and SdhD). It depends on heme as a cofactor.

It localises to the cell membrane. In terms of biological role, membrane-anchoring subunit of succinate dehydrogenase 2 (Sdh2). Sdh2 may catalyze the two-electron oxidation of succinate to fumarate with a corresponding reduction of quinone to quinol under low oxygen conditions, when the primary aerobic succinate dehydrogenase (Sdh1) is inhibited. Sdh2 seems to be the generator of the proton motive force (PMF) under hypoxia. The chain is Succinate dehydrogenase 2 membrane subunit SdhC from Mycobacterium tuberculosis (strain ATCC 25618 / H37Rv).